The chain runs to 624 residues: Anti-CBASS protein Acb1 (624 aa).

Tyrosine 106 serves as a coordination point for 3',3'-cGAMP. Tyrosine 106 contributes to the 3',3'-cUAMP binding site. Catalysis depends on residues histidine 503, threonine 505, histidine 581, and threonine 583. Tryptophan 617 is a 3',3'-cGAMP binding site. 3',3'-cUAMP is bound at residue tryptophan 617.

This sequence belongs to the anti-CBASS protein Acb1 family.

It carries out the reaction 3',3'-cUAMP + H2O = U[3'-5']pAp[3'] + H(+). The enzyme catalyses 3',3',3'-c-tri-AMP + H2O = A[3'-5']pA[3'-5']pAp[3'] + H(+). The catalysed reaction is 3',3',3'-cAAG + H2O = G[3'-5']pA[3'-5']pAp[3'] + H(+). It catalyses the reaction 3',3',3'-cAAG + H2O = A[3'-5']pG[3'-5']pAp[3'] + H(+). It carries out the reaction 3',3'-cGAMP + H2O = G[3'-5']pAp[3'] + H(+). Counteracts or regulates the endogenous CBASS antiviral defense system. Phosphodiesterase that enables metal-independent hydrolysis of the host cyclic di- and trinucleotide CBASS signals such as 3'3'-cGAMP, 3'3'cUA, and 3'3'3'-cAAA. In Sphingomonas paeninsulae, this protein is Anti-CBASS protein Acb1.